The chain runs to 488 residues: Inosine-5'-monophosphate dehydrogenase (488 aa).

2 CBS domains span residues V95–I153 and M157–E216. Residues D250 and G300–G302 each bind NAD(+). G302 and G304 together coordinate K(+). S305 provides a ligand contact to IMP. C307 contributes to the K(+) binding site. C307 serves as the catalytic Thioimidate intermediate. IMP contacts are provided by residues D340 to G342, G363 to S364, and Y387 to G391. R403 (proton acceptor) is an active-site residue. E417 contributes to the IMP binding site. The tract at residues A467–F488 is disordered. The K(+) site is built by E471, S472, and H473. A compositionally biased stretch (polar residues) spans H475–F488.

Belongs to the IMPDH/GMPR family. Homotetramer. Requires K(+) as cofactor.

The catalysed reaction is IMP + NAD(+) + H2O = XMP + NADH + H(+). Its pathway is purine metabolism; XMP biosynthesis via de novo pathway; XMP from IMP: step 1/1. Its activity is regulated as follows. Mycophenolic acid (MPA) is a non-competitive inhibitor that prevents formation of the closed enzyme conformation by binding to the same site as the amobile flap. In contrast, mizoribine monophosphate (MZP) is a competitive inhibitor that induces the closed conformation. MPA is a potent inhibitor of mammalian IMPDHs but a poor inhibitor of the bacterial enzymes. MZP is a more potent inhibitor of bacterial IMPDH. In terms of biological role, catalyzes the conversion of inosine 5'-phosphate (IMP) to xanthosine 5'-phosphate (XMP), the first committed and rate-limiting step in the de novo synthesis of guanine nucleotides, and therefore plays an important role in the regulation of cell growth. The protein is Inosine-5'-monophosphate dehydrogenase of Staphylococcus epidermidis (strain ATCC 35984 / DSM 28319 / BCRC 17069 / CCUG 31568 / BM 3577 / RP62A).